Here is a 548-residue protein sequence, read N- to C-terminus: Chaperonin GroEL (548 aa).

Residues 30–33 (TLGP), K51, 87–91 (DGTTT), G415, 479–481 (NAA), and D495 contribute to the ATP site.

The protein belongs to the chaperonin (HSP60) family. As to quaternary structure, forms a cylinder of 14 subunits composed of two heptameric rings stacked back-to-back. Interacts with the co-chaperonin GroES.

The protein resides in the cytoplasm. It carries out the reaction ATP + H2O + a folded polypeptide = ADP + phosphate + an unfolded polypeptide.. In terms of biological role, together with its co-chaperonin GroES, plays an essential role in assisting protein folding. The GroEL-GroES system forms a nano-cage that allows encapsulation of the non-native substrate proteins and provides a physical environment optimized to promote and accelerate protein folding. The protein is Chaperonin GroEL of Pseudomonas fluorescens (strain Pf0-1).